Here is a 298-residue protein sequence, read N- to C-terminus: tRNA dimethylallyltransferase (298 aa).

An ATP-binding site is contributed by 12–19; sequence GPTASGKT. Position 14–19 (14–19) interacts with substrate; sequence TASGKT. The interval 37 to 40 is interaction with substrate tRNA; it reads DSRQ.

Belongs to the IPP transferase family. In terms of assembly, monomer. The cofactor is Mg(2+).

It catalyses the reaction adenosine(37) in tRNA + dimethylallyl diphosphate = N(6)-dimethylallyladenosine(37) in tRNA + diphosphate. Catalyzes the transfer of a dimethylallyl group onto the adenine at position 37 in tRNAs that read codons beginning with uridine, leading to the formation of N6-(dimethylallyl)adenosine (i(6)A). This is tRNA dimethylallyltransferase from Synechococcus sp. (strain CC9902).